Here is a 79-residue protein sequence, read N- to C-terminus: Acyl carrier protein (79 aa).

In terms of domain architecture, Carrier spans methionine 1–asparagine 77. Serine 37 bears the O-(pantetheine 4'-phosphoryl)serine mark.

This sequence belongs to the acyl carrier protein (ACP) family. 4'-phosphopantetheine is transferred from CoA to a specific serine of apo-ACP by AcpS. This modification is essential for activity because fatty acids are bound in thioester linkage to the sulfhydryl of the prosthetic group.

It is found in the cytoplasm. The protein operates within lipid metabolism; fatty acid biosynthesis. In terms of biological role, carrier of the growing fatty acid chain in fatty acid biosynthesis. In Buchnera aphidicola subsp. Schizaphis graminum (strain Sg), this protein is Acyl carrier protein.